The following is a 1399-amino-acid chain: DNA-directed RNA polymerase subunit beta' (1399 aa).

Zn(2+) is bound by residues C70, C72, C85, and C88. Positions 460, 462, and 464 each coordinate Mg(2+). Residues C814, C888, C895, and C898 each coordinate Zn(2+). Residues 1367 to 1399 (SERKRQRDLGKPQRVSASEAEAALTEALNSSGN) are disordered. Low complexity predominate over residues 1382 to 1399 (SASEAEAALTEALNSSGN).

Belongs to the RNA polymerase beta' chain family. As to quaternary structure, the RNAP catalytic core consists of 2 alpha, 1 beta, 1 beta' and 1 omega subunit. When a sigma factor is associated with the core the holoenzyme is formed, which can initiate transcription. Mg(2+) is required as a cofactor. Zn(2+) serves as cofactor.

The catalysed reaction is RNA(n) + a ribonucleoside 5'-triphosphate = RNA(n+1) + diphosphate. In terms of biological role, DNA-dependent RNA polymerase catalyzes the transcription of DNA into RNA using the four ribonucleoside triphosphates as substrates. This chain is DNA-directed RNA polymerase subunit beta', found in Pseudomonas aeruginosa (strain UCBPP-PA14).